The primary structure comprises 292 residues: 2-(5''-triphosphoribosyl)-3'-dephosphocoenzyme-A synthase (292 aa).

Belongs to the CitG/MdcB family.

The enzyme catalyses 3'-dephospho-CoA + ATP = 2'-(5''-triphospho-alpha-D-ribosyl)-3'-dephospho-CoA + adenine. Its function is as follows. Catalyzes the formation of 2-(5''-triphosphoribosyl)-3'-dephosphocoenzyme-A, the precursor of the prosthetic group of the holo-acyl carrier protein (gamma chain) of citrate lyase, from ATP and dephospho-CoA. This Escherichia coli O7:K1 (strain IAI39 / ExPEC) protein is 2-(5''-triphosphoribosyl)-3'-dephosphocoenzyme-A synthase.